An 83-amino-acid chain; its full sequence is U5-theraphotoxin-Hs1b 2 (83 aa).

Residues 1–21 (MQTSMFLTLTGLVLLFVVCYA) form the signal peptide. The propeptide occupies 22-49 (SESEEKEFPKELLSSIFAADSDFKEEER). Cystine bridges form between Cys51-Cys63, Cys56-Cys68, and Cys62-Cys75.

It belongs to the neurotoxin 10 (Hwtx-1) family. 51 (Hntx-8) subfamily. Hntx-8 sub-subfamily. In terms of tissue distribution, expressed by the venom gland.

Its subcellular location is the secreted. In terms of biological role, agglutinates erythrocytes. In Cyriopagopus schmidti (Chinese bird spider), this protein is U5-theraphotoxin-Hs1b 2.